Consider the following 223-residue polypeptide: Small ribosomal subunit protein uS3 (223 aa).

The region spanning 39-108 is the KH type-2 domain; sequence IRNFVKKNSY…NILINIVEVK (70 aa).

This sequence belongs to the universal ribosomal protein uS3 family. Part of the 30S ribosomal subunit. Forms a tight complex with proteins S10 and S14.

Functionally, binds the lower part of the 30S subunit head. Binds mRNA in the 70S ribosome, positioning it for translation. This Clostridium botulinum (strain 657 / Type Ba4) protein is Small ribosomal subunit protein uS3.